The following is a 197-amino-acid chain: Holliday junction branch migration complex subunit RuvA (197 aa).

The tract at residues 1–64 (MYEYIKGKYI…EDFIGVYGFL (64 aa)) is domain I. The tract at residues 65 to 144 (TKDELSMFKL…DILEEDDEQI (80 aa)) is domain II. Residues 145–149 (INKVA) are flexible linker. The domain III stretch occupies residues 149-197 (ADDKKVLEAVAALVTLGYSEKEANKVINSCDKNNSLEQIIKEALKYLMK).

Belongs to the RuvA family. Homotetramer. Forms an RuvA(8)-RuvB(12)-Holliday junction (HJ) complex. HJ DNA is sandwiched between 2 RuvA tetramers; dsDNA enters through RuvA and exits via RuvB. An RuvB hexamer assembles on each DNA strand where it exits the tetramer. Each RuvB hexamer is contacted by two RuvA subunits (via domain III) on 2 adjacent RuvB subunits; this complex drives branch migration. In the full resolvosome a probable DNA-RuvA(4)-RuvB(12)-RuvC(2) complex forms which resolves the HJ.

The protein resides in the cytoplasm. The RuvA-RuvB-RuvC complex processes Holliday junction (HJ) DNA during genetic recombination and DNA repair, while the RuvA-RuvB complex plays an important role in the rescue of blocked DNA replication forks via replication fork reversal (RFR). RuvA specifically binds to HJ cruciform DNA, conferring on it an open structure. The RuvB hexamer acts as an ATP-dependent pump, pulling dsDNA into and through the RuvAB complex. HJ branch migration allows RuvC to scan DNA until it finds its consensus sequence, where it cleaves and resolves the cruciform DNA. The sequence is that of Holliday junction branch migration complex subunit RuvA from Clostridium botulinum (strain ATCC 19397 / Type A).